Here is a 366-residue protein sequence, read N- to C-terminus: Ribosomal RNA large subunit methyltransferase M (366 aa).

S-adenosyl-L-methionine-binding positions include Ser188, 221–224, Asp240, Asp260, and Asp277; that span reads CPGG. Lys306 functions as the Proton acceptor in the catalytic mechanism.

This sequence belongs to the class I-like SAM-binding methyltransferase superfamily. RNA methyltransferase RlmE family. RlmM subfamily. As to quaternary structure, monomer.

The protein resides in the cytoplasm. It catalyses the reaction cytidine(2498) in 23S rRNA + S-adenosyl-L-methionine = 2'-O-methylcytidine(2498) in 23S rRNA + S-adenosyl-L-homocysteine + H(+). Its function is as follows. Catalyzes the 2'-O-methylation at nucleotide C2498 in 23S rRNA. This Shigella dysenteriae serotype 1 (strain Sd197) protein is Ribosomal RNA large subunit methyltransferase M.